The chain runs to 261 residues: Recombination protein bet (261 aa).

In terms of biological role, gene bet protein functions in general recombination and in the late, rolling-circle mode of lambda DNA replication. Has a function similar to that of E.coli recT. It is a single-stranded DNA binding protein that can promote renaturation of DNA. The chain is Recombination protein bet (bet) from Escherichia coli (Bacteriophage lambda).